The sequence spans 572 residues: Formate--tetrahydrofolate ligase (572 aa).

Residue 65–72 (TPLGEGKT) coordinates ATP.

Belongs to the formate--tetrahydrofolate ligase family.

The enzyme catalyses (6S)-5,6,7,8-tetrahydrofolate + formate + ATP = (6R)-10-formyltetrahydrofolate + ADP + phosphate. Its pathway is one-carbon metabolism; tetrahydrofolate interconversion. In Chloroflexus aurantiacus (strain ATCC 29366 / DSM 635 / J-10-fl), this protein is Formate--tetrahydrofolate ligase.